Reading from the N-terminus, the 882-residue chain is Valine--tRNA ligase (882 aa).

The 'HIGH' region motif lies at 50–60 (PNVTGKLHLGH). A 'KMSKS' region motif is present at residues 526 to 530 (KMSKS). Residue Lys529 participates in ATP binding. The stretch at 810 to 881 (LEALIDLDLE…VLERIETLKE (72 aa)) forms a coiled coil.

It belongs to the class-I aminoacyl-tRNA synthetase family. ValS type 1 subfamily. In terms of assembly, monomer.

It localises to the cytoplasm. It carries out the reaction tRNA(Val) + L-valine + ATP = L-valyl-tRNA(Val) + AMP + diphosphate. Functionally, catalyzes the attachment of valine to tRNA(Val). As ValRS can inadvertently accommodate and process structurally similar amino acids such as threonine, to avoid such errors, it has a 'posttransfer' editing activity that hydrolyzes mischarged Thr-tRNA(Val) in a tRNA-dependent manner. The chain is Valine--tRNA ligase from Listeria innocua serovar 6a (strain ATCC BAA-680 / CLIP 11262).